The chain runs to 128 residues: Hemoglobin subunit beta-1 (128 aa).

The Globin domain maps to 2–128 (HWTAEEKALV…VVDALSKGYH (127 aa)). Histidine 51 and histidine 74 together coordinate heme b.

The protein belongs to the globin family. Hb 1 is a heterotetramer of two alpha and two beta-1 chains. Red blood cells (at protein level).

Functionally, involved in oxygen transport from gills to the various peripheral tissues. The protein is Hemoglobin subunit beta-1 of Somniosus microcephalus (Greenland sleeper shark).